The following is a 465-amino-acid chain: UDP-glycosyltransferase TURAN (465 aa).

At 1-75 (MGKRGRACVV…FIQYFPKILY (75 aa)) the chain is on the cytoplasmic side. A helical membrane pass occupies residues 76–96 (PVTLLLKAFIQFTMLLWFLFV). Over 97–465 (KVPAPDIFLV…TQVVSQIADS (369 aa)) the chain is Lumenal. An N-linked (GlcNAc...) asparagine glycan is attached at asparagine 238.

Belongs to the glycosyltransferase group 1 family. Glycosyltransferase 33 subfamily.

Its subcellular location is the endoplasmic reticulum membrane. It functions in the pathway protein modification; protein glycosylation. In terms of biological role, required for pollen tube (PT) growth and integrity by affecting the stability of the pollen-specific ANX1 and ANX2 proteins. Involved in protein N-glycosylation in the endoplasmic reticulum (ER), especially in the female gametophyte. Mediates PT reception in synergids through protein glycosylation. The chain is UDP-glycosyltransferase TURAN from Arabidopsis thaliana (Mouse-ear cress).